The sequence spans 61 residues: [Val1,Thr6]-bradykinyl-Val,Asp (61 aa).

An N-terminal signal peptide occupies residues 1-22; that stretch reads MAFLKKSLFLVLFLGVVSLSFC. The propeptide occupies 23 to 48; that stretch reads EEEEREEHEEEKREAEAAESAENLIS. Residues 27-61 form a disordered region; the sequence is REEHEEEKREAEAAESAENLISKRVPPGFTPFRVD.

Expressed by the skin glands. Expression levels in inguinal glands and granular glands are virtually the same.

The protein resides in the secreted. Induces contraction of rat ileum smooth muscle (EC(50)=2.73 uM) but has no activity towards rat smooth muscle from tail artery, urinary bladder or uterus. Binds to both bradykinin receptor B1 (BDKRB1) and B2 (BDKRB2); the effect via BDKRB1 is stronger. The sequence is that of [Val1,Thr6]-bradykinyl-Val,Asp from Physalaemus nattereri (Cuyaba dwarf frog).